A 453-amino-acid polypeptide reads, in one-letter code: Retroviral integration site protein Fli-1 homolog (453 aa).

The PNT domain occupies 111 to 197 (PPPPNMTTNE…SHLNYLRDSS (87 aa)). The segment covering 201-214 (GYNTQAHTDQSSRL) has biased composition (polar residues). Residues 201 to 273 (GYNTQAHTDQ…YQILGPTSSR (73 aa)) are disordered. A compositionally biased stretch (basic and acidic residues) spans 215–226 (TAKEDPSYEAVR). Polar residues-rich tracts occupy residues 230–239 (WGNSMSSPVT) and 246–273 (GTQNVNKSGDQQRSQPDPYQILGPTSSR). Positions 282–362 (IQLWQFLLEL…HGKRYAYKFD (81 aa)) form a DNA-binding region, ETS.

Belongs to the ETS family.

It localises to the nucleus. The chain is Retroviral integration site protein Fli-1 homolog (fli1) from Xenopus laevis (African clawed frog).